A 378-amino-acid chain; its full sequence is MKHSVHFGAGNIGRGFIGEILFKNGFHIDFVDVNNQIIHALNEKGKYEIEIAQKGQSRIEVTNVAGINSKEHPEQVIEAIQKTDIITTAIGPNILPFIAELLAKGIEARRVAGNTQVLDVMACENMIGGSQFLYQEVKKYLSPEGLTFADNYIGFPNAAVDRIVPAQSHEDSLFVVVEPFNEWVVETKRLKNPDLRLKDVHYEEDLEPFIERKLFSVNSGHATSAYIGAHYGAKTILEALQNPNIKSRIESVLAEIRSLLIAKWNFDKKELENYHKVIIERFENPFIVDEVSRVARTPIRKLGYNERFIRPIRELKELSLSYKNLLKTVGYAFDYRDVNDEESIRLGELLAKQLVKDVVIQVTGLDDQELIEQIVEYI.

Position 4 to 15 (4 to 15) interacts with NAD(+); the sequence is SVHFGAGNIGRG.

This sequence belongs to the mannitol dehydrogenase family.

The enzyme catalyses D-mannitol 1-phosphate + NAD(+) = beta-D-fructose 6-phosphate + NADH + H(+). The polypeptide is Mannitol-1-phosphate 5-dehydrogenase (Streptococcus pneumoniae (strain ATCC BAA-255 / R6)).